Consider the following 231-residue polypeptide: Ribonuclease P protein component 3 (231 aa).

The protein belongs to the eukaryotic/archaeal RNase P protein component 3 family. In terms of assembly, consists of a catalytic RNA component and at least 4-5 protein subunits.

The protein resides in the cytoplasm. It carries out the reaction Endonucleolytic cleavage of RNA, removing 5'-extranucleotides from tRNA precursor.. Part of ribonuclease P, a protein complex that generates mature tRNA molecules by cleaving their 5'-ends. This is Ribonuclease P protein component 3 from Methanococcus vannielii (strain ATCC 35089 / DSM 1224 / JCM 13029 / OCM 148 / SB).